The chain runs to 92 residues: Bombyxin A-3 (92 aa).

A signal peptide spans 1–19 (MKILLAIALMLSTVMWVST). Residue Gln-20 is modified to Pyrrolidone carboxylic acid. Cystine bridges form between Cys-29-Cys-79, Cys-41-Cys-92, and Cys-78-Cys-83. The propeptide at 50 to 70 (SDAQYVSYGSAWLMPYSEGRG) is c peptide like.

It belongs to the insulin family. In terms of assembly, heterodimer of a B chain and an A chain linked by two disulfide bonds.

Its subcellular location is the secreted. Functionally, brain peptide responsible for activation of prothoracic glands to produce ecdysone in insects. The chain is Bombyxin A-3 (BBXA3) from Bombyx mori (Silk moth).